The sequence spans 179 residues: Apoptosis regulator Bcl-2 homolog (179 aa).

Positions 76–95 (ELFKDLINWGRICGFIVFSA) match the BH1 motif. The BH2 motif lies at 126 to 141 (PWMISHGGQEEFLAFS).

Belongs to the Bcl-2 family. In terms of assembly, interacts with host BECN1 (via BH3 homology domain); this interaction allows the virus to inhibit BECN1, and thus autophagy. Interacts with host BID. Interacts with host BAX.

Its subcellular location is the host mitochondrion. It is found in the host endoplasmic reticulum. Its function is as follows. Suppresses apoptosis in host cell to promote the viral replication. Has the ability to potentially bind to all the members of the proapoptotic Bcl-2 family. Inhibits autophagy by interacting with host Beclin 1 (BECN1). The sequence is that of Apoptosis regulator Bcl-2 homolog from Ornithodoros (relapsing fever ticks).